Reading from the N-terminus, the 220-residue chain is UPF0319 protein YccT (220 aa).

The first 20 residues, 1-20 (MKTGALATFLALCLPVTVFA), serve as a signal peptide directing secretion.

Belongs to the UPF0319 family.

The sequence is that of UPF0319 protein YccT from Salmonella agona (strain SL483).